We begin with the raw amino-acid sequence, 526 residues long: Butyrophilin subfamily 1 member A1 (526 aa).

Positions 1 to 26 are cleaved as a signal peptide; that stretch reads MAVFPNSCLAGCLLIFILLQLPKLDS. 2 consecutive Ig-like V-type domains span residues 27–140 and 148–234; these read APFD…VHLK and PHIS…VEVS. The Extracellular segment spans residues 27 to 242; it reads APFDVIGPQE…VSIPASFFPR (216 aa). 2 cysteine pairs are disulfide-bonded: Cys50–Cys124 and Cys164–Cys218. N-linked (GlcNAc...) (complex) asparagine glycosylation is present at Asn55. A glycan (N-linked (GlcNAc...) (hybrid) asparagine) is linked at Asn215. Residues 243–269 form a helical membrane-spanning segment; sequence LTPWMVAVAVILVVLGLLTIGSIFFTW. Topologically, residues 270–526 are cytoplasmic; it reads RLYKERSRQR…IPLQPSQGVP (257 aa). One can recognise a B30.2/SPRY domain in the interval 285–479; that stretch reads SKEKLLEELK…LTICPVTDGL (195 aa).

Belongs to the immunoglobulin superfamily. BTN/MOG family. As to quaternary structure, seems to associate with xanthine dehydrogenase/oxidase. Expressed in mammary tissue.

The protein resides in the membrane. May function in the secretion of milk-fat droplets. May act as a specific membrane-associated receptor for the association of cytoplasmic droplets with the apical plasma membrane. Inhibits the proliferation of CD4 and CD8 T-cells activated by anti-CD3 antibodies, T-cell metabolism and IL2 and IFNG secretion. This Bos taurus (Bovine) protein is Butyrophilin subfamily 1 member A1 (BTN1A1).